Reading from the N-terminus, the 291-residue chain is ATP synthase gamma chain (291 aa).

It belongs to the ATPase gamma chain family. F-type ATPases have 2 components, CF(1) - the catalytic core - and CF(0) - the membrane proton channel. CF(1) has five subunits: alpha(3), beta(3), gamma(1), delta(1), epsilon(1). CF(0) has three main subunits: a, b and c.

The protein resides in the cell inner membrane. Functionally, produces ATP from ADP in the presence of a proton gradient across the membrane. The gamma chain is believed to be important in regulating ATPase activity and the flow of protons through the CF(0) complex. The chain is ATP synthase gamma chain from Neisseria meningitidis serogroup B (strain ATCC BAA-335 / MC58).